The primary structure comprises 1338 residues: Thioester-containing protein 1 allele S3 (1338 aa).

An N-terminal signal peptide occupies residues 1–21 (MWQFIRSRILTVIIFIGAAHG). 5 N-linked (GlcNAc...) asparagine glycosylation sites follow: Asn-68, Asn-199, Asn-242, Asn-312, and Asn-481. The may contain the cleavage site stretch occupies residues 580–609 (ENEFDIFHSLGLFARTLDDILFDSANEKTG). Residues Asn-637, Asn-728, Asn-813, and Asn-828 are each glycosylated (N-linked (GlcNAc...) asparagine). The isoglutamyl cysteine thioester (Cys-Gln) cross-link spans 859-862 (CGEQ). Intrachain disulfides connect Cys-1217/Cys-1283, Cys-1326/Cys-1338, and Cys-1329/Cys-1334.

Heterodimer of a TEP1-N chain and an TEP1-C chain non-covalently linked. Forms a complex composed of TEP1-N and TEP1-C heterodimer, LRIM1 and APL1C; the interaction stabilizes TEP1-N and TEP1-C heterodimer, prevents its binding to tissues while circulating in the hemolymph and protects the thioester bond from hydrolysis. Mature TEP1 and to a lesser extent full-length TEP1 interact with SPCLIP1; the interaction is induced by microbial infection. In the hemolymph, the full-length protein is cleaved by an unknow protease into a 75kDa N-terminal (TEP1-N) chain and an 80kDa C-terminal (TEP1-C) chain which remain non-covalently linked. The TEP1-C chain contains the thioester bond which covalently binds to the pathogen surface. Cleavage is induced by bacterial infection or aseptic wound injury. During embryonic and pupal development, the cleaved form is the predominant form. Post-translationally, N-glycosylated.

It is found in the secreted. Functionally, plays an essential role in the innate immune response against bacteria, fungi and protozoa infection. After proteolytic cleavage, the protein C-terminus binds covalently through a thioester bond to the pathogen surface resulting in pathogen clearance either by melanization or lysis. Initiate the recruitment and activation of a cascade of proteases, mostly of CLIP-domain serine proteases, which leads to the proteolytic cleavage of the prophenoloxidase (PPO) into active phenoloxidase (PO), the rate-limiting enzyme in melanin biosynthesis. In response to parasite P.berghei-mediated infection, binds to and mediates killing of ookinetes, as they egress from midgut epithelial cells into the basal labyrinth, by both lysis and melanization. During bacterial infection, binds to both Gram-positive and Gram-negative bacteria but only promotes phagocytosis of Gram-negative bacteria. Promotes the accumulation of SPCLIP1 onto the surface of P.berghei ookinetes and bacterium E.coli which leads to the melanization of the pathogen. Recruits CLIPA2 to bacteria surface. In response to bacterial infection, required for periostial hemocyte aggregation, but not for the aggregation of sessile hemocytes in non-periostial regions. During the late stage of fungus B.bassiana-mediated infection, required for the initiation of hyphae melanization by binding to the surface of hyphae and recruiting prophenoloxidase PPO to them. Plays a role in male fertility by binding to defective sperm cells and promoting their removal during spermatogenesis. In terms of biological role, binds to and mediates killing of parasite P.bergei ookinetes by lysis. Its function is as follows. Binds covalently through a thioester bond to the pathogen surface resulting in pathogen clearance. This chain is Thioester-containing protein 1 allele S3, found in Anopheles gambiae (African malaria mosquito).